A 541-amino-acid polypeptide reads, in one-letter code: Cytosolic phospholipase A2 gamma (541 aa).

Positions 1–541 (MGSSEVSIIP…KDSARSCCLA (541 aa)) constitute a PLA2c domain. Residue Ser-82 is the Nucleophile of the active site. The segment at 260–292 (LTLKGLWRRAVANAKSIGHLIFARLLRLQESSQ) is required for lipid droplet localization. Ser-337 is subject to Phosphoserine. Asp-385 functions as the Proton acceptor in the catalytic mechanism. Cys-538 bears the Cysteine methyl ester mark. Cys-538 is lipidated: S-farnesyl cysteine. Residues 539–541 (CLA) constitute a propeptide, removed in mature form.

(Microbial infection) Interacts with HCV non-structural protein 4B/NS4B; this interaction likely initiates the recruitment of replication complexes to lipid droplets. In terms of tissue distribution, highly expressed in heart and skeletal muscle.

The protein resides in the cell membrane. It is found in the endoplasmic reticulum membrane. Its subcellular location is the mitochondrion membrane. It localises to the lipid droplet. It carries out the reaction a 1,2-diacyl-sn-glycero-3-phosphocholine + H2O = a 1-acyl-sn-glycero-3-phosphocholine + a fatty acid + H(+). The catalysed reaction is a 1-O-alkyl-2-acyl-sn-glycero-3-phosphocholine + H2O = a 1-O-alkyl-sn-glycero-3-phosphocholine + a fatty acid + H(+). The enzyme catalyses 1,2-dihexadecanoyl-sn-glycero-3-phosphocholine + H2O = 1-hexadecanoyl-sn-glycero-3-phosphocholine + hexadecanoate + H(+). It catalyses the reaction 1-hexadecanoyl-2-(9Z-octadecenoyl)-sn-glycero-3-phosphocholine + H2O = 1-hexadecanoyl-sn-glycero-3-phosphocholine + (9Z)-octadecenoate + H(+). It carries out the reaction 1-hexadecanoyl-2-(9Z,12Z-octadecadienoyl)-sn-glycero-3-phosphocholine + H2O = (9Z,12Z)-octadecadienoate + 1-hexadecanoyl-sn-glycero-3-phosphocholine + H(+). The catalysed reaction is 1-hexadecanoyl-2-(5Z,8Z,11Z,14Z-eicosatetraenoyl)-sn-glycero-3-phosphocholine + H2O = 1-hexadecanoyl-sn-glycero-3-phosphocholine + (5Z,8Z,11Z,14Z)-eicosatetraenoate + H(+). The enzyme catalyses 1-O-hexadecyl-2-(5Z,8Z,11Z,14Z)-eicosatetraenoyl-sn-glycero-3-phosphocholine + H2O = 1-O-hexadecyl-sn-glycero-3-phosphocholine + (5Z,8Z,11Z,14Z)-eicosatetraenoate + H(+). It catalyses the reaction 1-hexadecanoyl-2-(5Z,8Z,11Z,14Z-eicosatetraenoyl)-sn-glycero-3-phosphocholine + H2O = 2-(5Z,8Z,11Z,14Z)-eicosatetraenoyl-sn-glycero-3-phosphocholine + hexadecanoate + H(+). It carries out the reaction a 1-acyl-sn-glycero-3-phosphocholine + H2O = sn-glycerol 3-phosphocholine + a fatty acid + H(+). The catalysed reaction is 1-hexadecanoyl-sn-glycero-3-phosphocholine + H2O = sn-glycerol 3-phosphocholine + hexadecanoate + H(+). The enzyme catalyses 2 1-hexadecanoyl-sn-glycero-3-phosphocholine = 1,2-dihexadecanoyl-sn-glycero-3-phosphocholine + sn-glycerol 3-phosphocholine. It catalyses the reaction 1-hexadecanoyl-sn-glycero-3-phosphoethanolamine + 1-hexadecanoyl-sn-glycero-3-phosphocholine = 1,2-dihexadecanoyl-sn-glycero-3-phosphoethanolamine + sn-glycerol 3-phosphocholine. It carries out the reaction 1-hexadecanoyl-sn-glycero-3-phosphoethanolamine + 1-hexadecanoyl-sn-glycero-3-phosphocholine = sn-glycero-3-phosphoethanolamine + 1,2-dihexadecanoyl-sn-glycero-3-phosphocholine. The catalysed reaction is 2 1-hexadecanoyl-sn-glycero-3-phosphoethanolamine = 1,2-dihexadecanoyl-sn-glycero-3-phosphoethanolamine + sn-glycero-3-phosphoethanolamine. The enzyme catalyses 1-O-hexadecyl-sn-glycero-3-phosphocholine + 1-hexadecanoyl-sn-glycero-3-phosphocholine = 1-O-hexadecyl-2-hexadecanoyl-sn-glycero-3-phosphocholine + sn-glycerol 3-phosphocholine. It catalyses the reaction a 1-O-(1Z-alkenyl)-sn-glycero-3-phosphoethanolamine + 1-hexadecanoyl-sn-glycero-3-phosphocholine = 1-O-(1Z)-alkenyl-2-hexadecanoyl-sn-glycero-3-phosphoethanolamine + sn-glycerol 3-phosphocholine. It carries out the reaction 1-O-hexadecyl-sn-glycero-3-phosphocholine + 1-hexadecanoyl-sn-glycero-3-phosphoethanolamine = 1-O-hexadecyl-2-hexadecanoyl-sn-glycero-3-phosphocholine + sn-glycero-3-phosphoethanolamine. The catalysed reaction is 1-octadecanoyl-2-(5Z,8Z,11Z,14Z)-eicosatetraenoyl-sn-glycero-3-phosphoethanolamine + 1-hexadecanoyl-sn-glycero-3-phosphocholine = 1-octadecanoyl-sn-glycero-3-phosphoethanolamine + 1-hexadecanoyl-2-(5Z,8Z,11Z,14Z-eicosatetraenoyl)-sn-glycero-3-phosphocholine. The enzyme catalyses 1-octadecanoyl-2-(5Z,8Z,11Z,14Z)-eicosatetraenoyl-sn-glycero-3-phosphoethanolamine + 1-O-hexadecyl-sn-glycero-3-phosphocholine = 1-octadecanoyl-sn-glycero-3-phosphoethanolamine + 1-O-hexadecyl-2-(5Z,8Z,11Z,14Z)-eicosatetraenoyl-sn-glycero-3-phosphocholine. It catalyses the reaction 1-hexadecanoyl-2-(9Z,12Z-octadecadienoyl)-sn-glycero-3-phosphocholine + a 1-O-(1Z-alkenyl)-sn-glycero-3-phosphoethanolamine = 1-O-(1Z-alkenyl)-2-(9Z,12Z-octadecadienoyl)-sn-glycero-3-phosphoethanolamine + 1-hexadecanoyl-sn-glycero-3-phosphocholine. It carries out the reaction 1-hexadecanoyl-2-(5Z,8Z,11Z,14Z-eicosatetraenoyl)-sn-glycero-3-phosphocholine + a 1-O-(1Z-alkenyl)-sn-glycero-3-phosphoethanolamine = 1-O-(1Z)-alkenyl-2-(5Z,8Z,11Z,14Z)-eicosatetraenoyl-sn-glycero-3-phosphoethanolamine + 1-hexadecanoyl-sn-glycero-3-phosphocholine. Not regulated by calcium, coenzyme A or ATP. Lysophospholipase activity is inhibited by palmitoyl-CoA. Lysophospholipase and O-acyltransferase activities are inhibited by methylarachidonoylfluorophosphonate. Lysophospholipase activity is inhibited by phosphatidate or lysophosphatidate. O-acyltransferase activity is up-regulated at low concentration (10-20 uM) of phosphatidate or lysophosphatidate, but inhibited at higher concentrations. Its function is as follows. Calcium-independent phospholipase, lysophospholipase and O-acyltransferase involved in phospholipid remodeling with implications in endoplasmic reticulum membrane homeostasis and lipid droplet biogenesis. Preferentially hydrolyzes the ester bond of the fatty acyl group attached at the sn-2 position of phospholipids with choline and ethanolamine head groups, producing lysophospholipids that are used in deacylation-reacylation cycles. Transfers the sn-1 fatty acyl from one lysophospholipid molecule to the sn-2 position of another lysophospholipid to form diacyl, alkylacyl and alkenylacyl glycerophospholipids. Cleaves ester bonds but not alkyl or alkenyl ether bonds at sn-1 position of lysophospholipids. Catalyzes sn-2 fatty acyl transfer from phospholipids to the sn-2 position of 1-O-alkyl or 1-O-alkenyl lysophospholipids with lower efficiency. In response to dietary fatty acids, may play a role in the formation of nascent lipid droplets from the endoplasmic reticulum likely by regulating the phospholipid composition of these organelles. Functionally, (Microbial infection) May play a role in replication and assembly of human hepatitis C virus (HCV). In response to HCV infection, promotes remodeling of host endoplasmic reticulum membranes to form organelle-like structures called membranous web, where HCV replication occur. Can further mediate translocation of replication complexes to lipid droplets to enable virion assembly. In terms of biological role, (Microbial infection) May facilitate human T-lymphotropic virus type 1 (HTLV-1) infection by promoting leukotriene B4 (LTB4) biosynthesis. LTB4 acts as a chemoattractant for HTLV-1-infected CD4-positive T cells and favors cell to cell viral transmission. This chain is Cytosolic phospholipase A2 gamma (PLA2G4C), found in Homo sapiens (Human).